The following is a 141-amino-acid chain: Hemoglobin subunit alpha-2 (141 aa).

The 141-residue stretch at 1–141 (VLSEGNKKII…VTYQLSSLYR (141 aa)) folds into the Globin domain. His59 lines the O2 pocket. Residue His88 participates in heme b binding.

It belongs to the globin family. As to quaternary structure, heterotetramer of two alpha chains and two beta chains. Red blood cells.

Involved in oxygen transport from the lung to the various peripheral tissues. This Torpedo marmorata (Marbled electric ray) protein is Hemoglobin subunit alpha-2.